An 838-amino-acid chain; its full sequence is Leucine--tRNA ligase 1 (838 aa).

The 'HIGH' region motif lies at 40–51; it reads PYPSGAGLHVGH. Positions 608 to 612 match the 'KMSKS' region motif; the sequence is KMSKS. Lysine 611 lines the ATP pocket.

The protein belongs to the class-I aminoacyl-tRNA synthetase family.

It localises to the cytoplasm. It carries out the reaction tRNA(Leu) + L-leucine + ATP = L-leucyl-tRNA(Leu) + AMP + diphosphate. This Rhizobium johnstonii (strain DSM 114642 / LMG 32736 / 3841) (Rhizobium leguminosarum bv. viciae) protein is Leucine--tRNA ligase 1.